Consider the following 145-residue polypeptide: Large ribosomal subunit protein uL13 (145 aa).

It belongs to the universal ribosomal protein uL13 family. As to quaternary structure, part of the 50S ribosomal subunit.

Its function is as follows. This protein is one of the early assembly proteins of the 50S ribosomal subunit, although it is not seen to bind rRNA by itself. It is important during the early stages of 50S assembly. In Staphylococcus aureus (strain Mu3 / ATCC 700698), this protein is Large ribosomal subunit protein uL13.